The primary structure comprises 308 residues: Acetaldehyde dehydrogenase (308 aa).

25-28 (TGAI) provides a ligand contact to NAD(+). Catalysis depends on Cys139, which acts as the Acyl-thioester intermediate. Asn279 provides a ligand contact to NAD(+).

The protein belongs to the acetaldehyde dehydrogenase family.

The catalysed reaction is acetaldehyde + NAD(+) + CoA = acetyl-CoA + NADH + H(+). The sequence is that of Acetaldehyde dehydrogenase from Streptomyces griseus subsp. griseus (strain JCM 4626 / CBS 651.72 / NBRC 13350 / KCC S-0626 / ISP 5235).